The primary structure comprises 281 residues: Pantothenate synthetase (281 aa).

30–37 contacts ATP; sequence MGNLHAGH. Catalysis depends on histidine 37, which acts as the Proton donor. Residue glutamine 61 participates in (R)-pantoate binding. Glutamine 61 lines the beta-alanine pocket. 149–152 contributes to the ATP binding site; the sequence is GRKD. Glutamine 155 is a (R)-pantoate binding site. ATP is bound by residues valine 178 and 186 to 189; that span reads MSSR.

The protein belongs to the pantothenate synthetase family. In terms of assembly, homodimer.

It localises to the cytoplasm. It carries out the reaction (R)-pantoate + beta-alanine + ATP = (R)-pantothenate + AMP + diphosphate + H(+). The protein operates within cofactor biosynthesis; (R)-pantothenate biosynthesis; (R)-pantothenate from (R)-pantoate and beta-alanine: step 1/1. In terms of biological role, catalyzes the condensation of pantoate with beta-alanine in an ATP-dependent reaction via a pantoyl-adenylate intermediate. In Shewanella amazonensis (strain ATCC BAA-1098 / SB2B), this protein is Pantothenate synthetase.